Here is a 435-residue protein sequence, read N- to C-terminus: Protein translocase subunit SecY (435 aa).

Transmembrane regions (helical) follow at residues 19 to 39 (ILFTIFIILVFRIGTTITVPG), 68 to 88 (FSVFALGVSPYITASIVVQLL), 116 to 136 (YIALVLAFVQAIGITAGFDTL), 147 to 167 (VQTYALICVLLATGSMIVTWL), 179 to 199 (GVSMIIFAGIVSAIPDMIKGI), 216 to 236 (FIFVGILIVAVLLIIYFTTFV), 269 to 289 (VIPVIFASSITAAPAAIFQVV), 311 to 331 (ISGMFMYAFLIVLFTFFYTFV), 372 to 392 (VGSLFLGFISILPILAKDVFG), and 395 to 415 (DAVALGGTSLLIIISTGIEGM).

It belongs to the SecY/SEC61-alpha family. In terms of assembly, component of the Sec protein translocase complex. Heterotrimer consisting of SecY, SecE and SecG subunits. The heterotrimers can form oligomers, although 1 heterotrimer is thought to be able to translocate proteins. Interacts with the ribosome. Interacts with SecDF, and other proteins may be involved. Interacts with SecA.

It is found in the cell membrane. In terms of biological role, the central subunit of the protein translocation channel SecYEG. Consists of two halves formed by TMs 1-5 and 6-10. These two domains form a lateral gate at the front which open onto the bilayer between TMs 2 and 7, and are clamped together by SecE at the back. The channel is closed by both a pore ring composed of hydrophobic SecY resides and a short helix (helix 2A) on the extracellular side of the membrane which forms a plug. The plug probably moves laterally to allow the channel to open. The ring and the pore may move independently. The chain is Protein translocase subunit SecY from Streptococcus sanguinis (strain SK36).